The sequence spans 475 residues: Aspartyl/glutamyl-tRNA(Asn/Gln) amidotransferase subunit B (475 aa).

Belongs to the GatB/GatE family. GatB subfamily. Heterotrimer of A, B and C subunits.

The catalysed reaction is L-glutamyl-tRNA(Gln) + L-glutamine + ATP + H2O = L-glutaminyl-tRNA(Gln) + L-glutamate + ADP + phosphate + H(+). The enzyme catalyses L-aspartyl-tRNA(Asn) + L-glutamine + ATP + H2O = L-asparaginyl-tRNA(Asn) + L-glutamate + ADP + phosphate + 2 H(+). Functionally, allows the formation of correctly charged Asn-tRNA(Asn) or Gln-tRNA(Gln) through the transamidation of misacylated Asp-tRNA(Asn) or Glu-tRNA(Gln) in organisms which lack either or both of asparaginyl-tRNA or glutaminyl-tRNA synthetases. The reaction takes place in the presence of glutamine and ATP through an activated phospho-Asp-tRNA(Asn) or phospho-Glu-tRNA(Gln). This Bacillus anthracis (strain A0248) protein is Aspartyl/glutamyl-tRNA(Asn/Gln) amidotransferase subunit B.